Here is a 315-residue protein sequence, read N- to C-terminus: Aspartate carbamoyltransferase catalytic subunit (315 aa).

Carbamoyl phosphate contacts are provided by Arg-65 and Thr-66. Lys-93 lines the L-aspartate pocket. The carbamoyl phosphate site is built by Arg-115, His-143, and Gln-146. Positions 176 and 231 each coordinate L-aspartate. Residues Gly-272 and Pro-273 each coordinate carbamoyl phosphate.

This sequence belongs to the aspartate/ornithine carbamoyltransferase superfamily. ATCase family. Heterododecamer (2C3:3R2) of six catalytic PyrB chains organized as two trimers (C3), and six regulatory PyrI chains organized as three dimers (R2).

It carries out the reaction carbamoyl phosphate + L-aspartate = N-carbamoyl-L-aspartate + phosphate + H(+). It functions in the pathway pyrimidine metabolism; UMP biosynthesis via de novo pathway; (S)-dihydroorotate from bicarbonate: step 2/3. Catalyzes the condensation of carbamoyl phosphate and aspartate to form carbamoyl aspartate and inorganic phosphate, the committed step in the de novo pyrimidine nucleotide biosynthesis pathway. The sequence is that of Aspartate carbamoyltransferase catalytic subunit from Hyphomonas neptunium (strain ATCC 15444).